A 405-amino-acid chain; its full sequence is Multidrug resistance protein MdtA (405 aa).

Residues 1–22 (MKTPRRFPLIALTVAAVLTAAA) form the signal peptide. Positions 35–52 (VQNRQGTEQQRASNSQGS) are enriched in polar residues. Residues 35–62 (VQNRQGTEQQRASNSQGSAKRAGNAPPV) form a disordered region.

It belongs to the membrane fusion protein (MFP) (TC 8.A.1) family. Part of a tripartite efflux system composed of MdtA, MdtB and MdtC.

The protein resides in the cell inner membrane. This is Multidrug resistance protein MdtA from Erwinia amylovora (strain ATCC 49946 / CCPPB 0273 / Ea273 / 27-3).